Consider the following 452-residue polypeptide: Glucose-6-phosphate isomerase (452 aa).

Catalysis depends on E290, which acts as the Proton donor. Catalysis depends on residues H311 and K425.

This sequence belongs to the GPI family.

The protein localises to the cytoplasm. It carries out the reaction alpha-D-glucose 6-phosphate = beta-D-fructose 6-phosphate. Its pathway is carbohydrate biosynthesis; gluconeogenesis. It functions in the pathway carbohydrate degradation; glycolysis; D-glyceraldehyde 3-phosphate and glycerone phosphate from D-glucose: step 2/4. Its function is as follows. Catalyzes the reversible isomerization of glucose-6-phosphate to fructose-6-phosphate. The protein is Glucose-6-phosphate isomerase of Limosilactobacillus reuteri (strain DSM 20016) (Lactobacillus reuteri).